The chain runs to 315 residues: Prephenate dehydratase (315 aa).

In terms of domain architecture, Prephenate dehydratase spans 7–190; sequence VVAYLGPAGT…ARTRFVAVQA (184 aa). The 80-residue stretch at 204-283 folds into the ACT domain; that stretch reads SVIFSLPNVP…LVFVGSWPSN (80 aa).

The catalysed reaction is prephenate + H(+) = 3-phenylpyruvate + CO2 + H2O. The protein operates within amino-acid biosynthesis; L-phenylalanine biosynthesis; phenylpyruvate from prephenate: step 1/1. The chain is Prephenate dehydratase (pheA) from Corynebacterium glutamicum (strain ATCC 13032 / DSM 20300 / JCM 1318 / BCRC 11384 / CCUG 27702 / LMG 3730 / NBRC 12168 / NCIMB 10025 / NRRL B-2784 / 534).